A 312-amino-acid chain; its full sequence is Probable deoxyhypusine synthase (312 aa).

Residue K285 is the Nucleophile of the active site.

It belongs to the deoxyhypusine synthase family. NAD(+) serves as cofactor.

It carries out the reaction [eIF5A protein]-L-lysine + spermidine = [eIF5A protein]-deoxyhypusine + propane-1,3-diamine. It functions in the pathway protein modification; eIF5A hypusination. In terms of biological role, catalyzes the NAD-dependent oxidative cleavage of spermidine and the subsequent transfer of the butylamine moiety of spermidine to the epsilon-amino group of a specific lysine residue of the eIF-5A precursor protein to form the intermediate deoxyhypusine residue. This Saccharolobus solfataricus (strain ATCC 35092 / DSM 1617 / JCM 11322 / P2) (Sulfolobus solfataricus) protein is Probable deoxyhypusine synthase (dys).